The primary structure comprises 381 residues: Sulfite reductase, dissimilatory-type subunit beta (381 aa).

[4Fe-4S] cluster is bound by residues Cys-151, Cys-188, Cys-189, Cys-193, Cys-231, Cys-258, Cys-261, and Cys-264. Siroheme is bound at residue Cys-193. The 4Fe-4S ferredoxin-type domain maps to 249–276; it reads NTIAIKNERCMYCGNCYTMCPALPISDG.

As to quaternary structure, heterohexamer of two alpha, two beta and two gamma subunits. It depends on [4Fe-4S] cluster as a cofactor. Siroheme is required as a cofactor.

It carries out the reaction [DsrC protein]-trisulfide + NAD(+) + 3 H2O = [DsrC protein]-dithiol + sulfite + NADH + 3 H(+). Functionally, catalyzes the reduction of sulfite to sulfide. This is the terminal oxidation reaction in sulfate respiration, a process catalyzed by the sulfate-reducing bacteria. In Nitratidesulfovibrio vulgaris (strain ATCC 29579 / DSM 644 / CCUG 34227 / NCIMB 8303 / VKM B-1760 / Hildenborough) (Desulfovibrio vulgaris), this protein is Sulfite reductase, dissimilatory-type subunit beta (dsvB).